The sequence spans 425 residues: Serine--tRNA ligase (425 aa).

Residue 233-235 (TAE) participates in L-serine binding. An ATP-binding site is contributed by 264–266 (RRE). Glu-287 provides a ligand contact to L-serine. ATP is bound at residue 351–354 (EISS). Position 385 (Ser-385) interacts with L-serine.

This sequence belongs to the class-II aminoacyl-tRNA synthetase family. Type-1 seryl-tRNA synthetase subfamily. Homodimer. The tRNA molecule binds across the dimer.

The protein localises to the cytoplasm. The enzyme catalyses tRNA(Ser) + L-serine + ATP = L-seryl-tRNA(Ser) + AMP + diphosphate + H(+). It carries out the reaction tRNA(Sec) + L-serine + ATP = L-seryl-tRNA(Sec) + AMP + diphosphate + H(+). It functions in the pathway aminoacyl-tRNA biosynthesis; selenocysteinyl-tRNA(Sec) biosynthesis; L-seryl-tRNA(Sec) from L-serine and tRNA(Sec): step 1/1. In terms of biological role, catalyzes the attachment of serine to tRNA(Ser). Is also able to aminoacylate tRNA(Sec) with serine, to form the misacylated tRNA L-seryl-tRNA(Sec), which will be further converted into selenocysteinyl-tRNA(Sec). The chain is Serine--tRNA ligase from Prochlorococcus marinus (strain AS9601).